The sequence spans 280 residues: 2-dehydro-3-deoxyphosphooctonate aldolase (280 aa).

It belongs to the KdsA family.

The protein localises to the cytoplasm. The enzyme catalyses D-arabinose 5-phosphate + phosphoenolpyruvate + H2O = 3-deoxy-alpha-D-manno-2-octulosonate-8-phosphate + phosphate. It participates in carbohydrate biosynthesis; 3-deoxy-D-manno-octulosonate biosynthesis; 3-deoxy-D-manno-octulosonate from D-ribulose 5-phosphate: step 2/3. The protein operates within bacterial outer membrane biogenesis; lipopolysaccharide biosynthesis. The polypeptide is 2-dehydro-3-deoxyphosphooctonate aldolase (Nitrosococcus oceani (strain ATCC 19707 / BCRC 17464 / JCM 30415 / NCIMB 11848 / C-107)).